The primary structure comprises 192 residues: Fe/S biogenesis protein NfuA (192 aa).

The [4Fe-4S] cluster site is built by Cys149 and Cys152.

The protein belongs to the NfuA family. Homodimer. [4Fe-4S] cluster is required as a cofactor.

In terms of biological role, involved in iron-sulfur cluster biogenesis. Binds a 4Fe-4S cluster, can transfer this cluster to apoproteins, and thereby intervenes in the maturation of Fe/S proteins. Could also act as a scaffold/chaperone for damaged Fe/S proteins. The polypeptide is Fe/S biogenesis protein NfuA (Pseudoalteromonas atlantica (strain T6c / ATCC BAA-1087)).